Here is a 511-residue protein sequence, read N- to C-terminus: Piperic acid synthase CYP719A37 (511 aa).

Residues 7–27 traverse the membrane as a helical segment; that stretch reads VDPALFSAFVSIIFFFLGMFL. Residue Cys455 coordinates heme.

It belongs to the cytochrome P450 family. It depends on heme as a cofactor. In terms of tissue distribution, specifically expressed in immature fruits and roots. Barely detectable in young leaves and flowering spadices.

The protein localises to the membrane. Its subcellular location is the endoplasmic reticulum membrane. The catalysed reaction is (E,E)-feruperate + reduced [NADPH--hemoprotein reductase] + O2 = (E,E)-piperate + oxidized [NADPH--hemoprotein reductase] + 2 H2O + H(+). Its pathway is aromatic compound metabolism. In terms of biological role, cytochrome P450 monooxygenase involved in the biosynthesis of aromatic piperamides natural products such as piperine (1-piperoyl-piperidine), the pungent principle contributing, together with several terpenoids, to the aromatic properties of black pepper fruits, and displaying numerous pharmacological activities such as antiproliferative, antitumor, antiangiogenesis, antioxidant, antidiabetic, antiobesity, cardioprotective, antimicrobial, antiaging, and immunomodulatory effects. Catalyzes the conversion of feruperic acid (5-(4-hydroxy-3-methoxyphenyl)-2,4-pentadienoic acid) to piperic acid. Inactive toward ferulic acid and feruperine. The protein is Piperic acid synthase CYP719A37 of Piper nigrum (Black pepper).